Consider the following 363-residue polypeptide: Lipase (363 aa).

The signal sequence occupies residues 1–24; the sequence is MVLKQRANYLGFLIVFFTAFLVEA. A propeptide spanning residues 25-94 is cleaved from the precursor; it reads VPIKRQSNST…SYPDSVVQAM (70 aa). Positions 33–69 are disordered; it reads STVDSLPPLIPSRTSAPSSSPSTTDPEAPAMSRNGPL. Low complexity predominate over residues 43–62; that stretch reads PSRTSAPSSSPSTTDPEAPA. 3 cysteine pairs are disulfide-bonded: cysteine 123–cysteine 362, cysteine 134–cysteine 137, and cysteine 329–cysteine 338. Residue serine 238 is the Nucleophile of the active site. Aspartate 297 functions as the Charge relay system in the catalytic mechanism. Aspartate 350 serves as a coordination point for Ca(2+). Histidine 351 acts as the Charge relay system in catalysis.

It belongs to the AB hydrolase superfamily. Lipase family.

It carries out the reaction a triacylglycerol + H2O = a diacylglycerol + a fatty acid + H(+). The polypeptide is Lipase (Rhizomucor miehei).